The chain runs to 284 residues: Probable endonuclease 4 (284 aa).

Positions 69, 109, 145, 179, 182, 216, 229, 231, and 261 each coordinate Zn(2+).

Belongs to the AP endonuclease 2 family. Zn(2+) serves as cofactor.

The enzyme catalyses Endonucleolytic cleavage to 5'-phosphooligonucleotide end-products.. Its function is as follows. Endonuclease IV plays a role in DNA repair. It cleaves phosphodiester bonds at apurinic or apyrimidinic (AP) sites, generating a 3'-hydroxyl group and a 5'-terminal sugar phosphate. This is Probable endonuclease 4 from Klebsiella pneumoniae (strain 342).